Reading from the N-terminus, the 190-residue chain is Crossover junction endodeoxyribonuclease RuvC (190 aa).

Active-site residues include D8, E67, and D139. Positions 8, 67, and 139 each coordinate Mg(2+).

It belongs to the RuvC family. In terms of assembly, homodimer which binds Holliday junction (HJ) DNA. The HJ becomes 2-fold symmetrical on binding to RuvC with unstacked arms; it has a different conformation from HJ DNA in complex with RuvA. In the full resolvosome a probable DNA-RuvA(4)-RuvB(12)-RuvC(2) complex forms which resolves the HJ. The cofactor is Mg(2+).

It localises to the cytoplasm. It carries out the reaction Endonucleolytic cleavage at a junction such as a reciprocal single-stranded crossover between two homologous DNA duplexes (Holliday junction).. Functionally, the RuvA-RuvB-RuvC complex processes Holliday junction (HJ) DNA during genetic recombination and DNA repair. Endonuclease that resolves HJ intermediates. Cleaves cruciform DNA by making single-stranded nicks across the HJ at symmetrical positions within the homologous arms, yielding a 5'-phosphate and a 3'-hydroxyl group; requires a central core of homology in the junction. The consensus cleavage sequence is 5'-(A/T)TT(C/G)-3'. Cleavage occurs on the 3'-side of the TT dinucleotide at the point of strand exchange. HJ branch migration catalyzed by RuvA-RuvB allows RuvC to scan DNA until it finds its consensus sequence, where it cleaves and resolves the cruciform DNA. This chain is Crossover junction endodeoxyribonuclease RuvC, found in Actinobacillus succinogenes (strain ATCC 55618 / DSM 22257 / CCUG 43843 / 130Z).